The chain runs to 1080 residues: Carbamoyl phosphate synthase large chain (1080 aa).

Residues 1–403 (MPKRTDLRTI…SLQKAVRGLE (403 aa)) form a carboxyphosphate synthetic domain region. Positions 129, 169, 175, 176, 208, 210, 215, 241, 242, 243, 285, and 299 each coordinate ATP. Residues 133–328 (RVAMQEIGLE…IAKIAAKLAV (196 aa)) form the ATP-grasp 1 domain. Residues Q285, E299, and N301 each contribute to the Mg(2+) site. Residues Q285, E299, and N301 each coordinate Mn(2+). Positions 404 to 554 (TGKVGLEPTG…YSTYEEECEA (151 aa)) are oligomerization domain. The segment at 555 to 942 (APSDRRKIMI…AFARAQEAGD (388 aa)) is carbamoyl phosphate synthetic domain. The region spanning 679–876 (QKLVQQLGLR…LAKIAARCMT (198 aa)) is the ATP-grasp 2 domain. Residues R715, R754, L756, E761, G787, V788, H789, S790, Q830, and E847 each coordinate ATP. Q830, E847, and N849 together coordinate Mg(2+). Residues Q830, E847, and N849 each coordinate Mn(2+). Residues 943 to 1080 (IRAPQPGRAF…LQELHKELQV (138 aa)) enclose the MGS-like domain. Residues 943–1080 (IRAPQPGRAF…LQELHKELQV (138 aa)) form an allosteric domain region.

Belongs to the CarB family. As to quaternary structure, composed of two chains; the small (or glutamine) chain promotes the hydrolysis of glutamine to ammonia, which is used by the large (or ammonia) chain to synthesize carbamoyl phosphate. Tetramer of heterodimers (alpha,beta)4. Mg(2+) serves as cofactor. It depends on Mn(2+) as a cofactor.

The catalysed reaction is hydrogencarbonate + L-glutamine + 2 ATP + H2O = carbamoyl phosphate + L-glutamate + 2 ADP + phosphate + 2 H(+). The enzyme catalyses hydrogencarbonate + NH4(+) + 2 ATP = carbamoyl phosphate + 2 ADP + phosphate + 2 H(+). It functions in the pathway amino-acid biosynthesis; L-arginine biosynthesis; carbamoyl phosphate from bicarbonate: step 1/1. Its pathway is pyrimidine metabolism; UMP biosynthesis via de novo pathway; (S)-dihydroorotate from bicarbonate: step 1/3. Large subunit of the glutamine-dependent carbamoyl phosphate synthetase (CPSase). CPSase catalyzes the formation of carbamoyl phosphate from the ammonia moiety of glutamine, carbonate, and phosphate donated by ATP, constituting the first step of 2 biosynthetic pathways, one leading to arginine and/or urea and the other to pyrimidine nucleotides. The large subunit (synthetase) binds the substrates ammonia (free or transferred from glutamine from the small subunit), hydrogencarbonate and ATP and carries out an ATP-coupled ligase reaction, activating hydrogencarbonate by forming carboxy phosphate which reacts with ammonia to form carbamoyl phosphate. The chain is Carbamoyl phosphate synthase large chain from Xylella fastidiosa (strain 9a5c).